Consider the following 484-residue polypeptide: Arachin Ahy-3 (484 aa).

Residues 1–20 form the signal peptide; it reads MAKLLALSVCFCFLVLGASS. Disulfide bonds link Cys32/Cys65 and Cys108/Cys305. A Cupin type-1 1 domain is found at 35–253; the sequence is QRLNAQRPDN…GFQVNEDIVR (219 aa). Positions 208–233 are disordered; it reads QQRSGRQSPKGEEQEQEQENEGGNVF. Positions 295 to 298 are excised as a propeptide; it reads DFNN. The region spanning 311 to 460 is the Cupin type-1 2 domain; it reads MNIGKSTSAD…SYGLQYEQAR (150 aa). A propeptide spanning residues 479 to 484 is cleaved from the precursor; the sequence is MIRTVA.

Belongs to the 11S seed storage protein (globulins) family. In terms of assembly, hexamer; each subunit is composed of an acidic and a basic chain derived from a single precursor and linked by a disulfide bond.

The polypeptide is Arachin Ahy-3 (Arachis hypogaea (Peanut)).